Consider the following 412-residue polypeptide: 4-hydroxy-3-methylbut-2-en-1-yl diphosphate synthase (ferredoxin) (412 aa).

Polar residues predominate over residues methionine 1 to glutamine 12. A disordered region spans residues methionine 1–arginine 22. Residues cysteine 314, cysteine 317, cysteine 348, and glutamate 355 each coordinate [4Fe-4S] cluster.

Belongs to the IspG family. [4Fe-4S] cluster is required as a cofactor.

It carries out the reaction (2E)-4-hydroxy-3-methylbut-2-enyl diphosphate + 2 oxidized [2Fe-2S]-[ferredoxin] + H2O = 2-C-methyl-D-erythritol 2,4-cyclic diphosphate + 2 reduced [2Fe-2S]-[ferredoxin] + H(+). The protein operates within isoprenoid biosynthesis; isopentenyl diphosphate biosynthesis via DXP pathway; isopentenyl diphosphate from 1-deoxy-D-xylulose 5-phosphate: step 5/6. Its function is as follows. Converts 2C-methyl-D-erythritol 2,4-cyclodiphosphate (ME-2,4cPP) into 1-hydroxy-2-methyl-2-(E)-butenyl 4-diphosphate. The protein is 4-hydroxy-3-methylbut-2-en-1-yl diphosphate synthase (ferredoxin) of Synechococcus sp. (strain JA-3-3Ab) (Cyanobacteria bacterium Yellowstone A-Prime).